A 646-amino-acid chain; its full sequence is Threonine--tRNA ligase (646 aa).

The 61-residue stretch at 1-61 (MIKITFPDGS…NEDANFVLYK (61 aa)) folds into the TGS domain. Residues 242–541 (DHRKIGKEMD…LIEHTAGKFP (300 aa)) are catalytic. Positions 337, 388, and 518 each coordinate Zn(2+).

Belongs to the class-II aminoacyl-tRNA synthetase family. As to quaternary structure, homodimer. Zn(2+) serves as cofactor.

The protein resides in the cytoplasm. The enzyme catalyses tRNA(Thr) + L-threonine + ATP = L-threonyl-tRNA(Thr) + AMP + diphosphate + H(+). Catalyzes the attachment of threonine to tRNA(Thr) in a two-step reaction: L-threonine is first activated by ATP to form Thr-AMP and then transferred to the acceptor end of tRNA(Thr). Also edits incorrectly charged L-seryl-tRNA(Thr). This chain is Threonine--tRNA ligase, found in Phocaeicola vulgatus (strain ATCC 8482 / DSM 1447 / JCM 5826 / CCUG 4940 / NBRC 14291 / NCTC 11154) (Bacteroides vulgatus).